Consider the following 308-residue polypeptide: Dual oxidase maturation factor 1 (308 aa).

Residues 1 to 21 lie on the Extracellular side of the membrane; that stretch reads MQANIFPFYPQPRTSFKFDTK. Residues 22–42 form a helical membrane-spanning segment; that stretch reads IIEIIIICIVTACTFIIILPG. At 43 to 49 the chain is on the cytoplasmic side; that stretch reads IRGKSRS. Residues 50–70 traverse the membrane as a helical segment; that stretch reads IWLFRILTSLFIGAVILAVNF. Residues 71–172 lie on the Extracellular side of the membrane; sequence TSDWETGIVT…SPCGLFQQYC (102 aa). Residues asparagine 94, asparagine 107, and asparagine 119 are each glycosylated (N-linked (GlcNAc...) asparagine). Residues 173–195 traverse the membrane as a helical segment; the sequence is ISTYYSSEIMWVAFGSWILYNVL. Residues 196–199 lie on the Cytoplasmic side of the membrane; it reads FSMP. Residues 200–220 form a helical membrane-spanning segment; it reads VILYGICMMFVTAICMLVSLI. At 221 to 247 the chain is on the extracellular side; the sequence is SFASVRQAPVCNIHFGNAVLKTHFGVS. Residues 248–268 traverse the membrane as a helical segment; that stretch reads YWLSLVTGLFCLIVSLVLLFL. Residues 269–308 are Cytoplasmic-facing; sequence YKTQPKVIRLIFSYGEEEDLSDKSENEEEHSSALSLNEML.

The protein belongs to the DUOXA family.

Its subcellular location is the membrane. Functionally, possible role in maturation and transport from the endoplasmic reticulum to the plasma membrane of functional dual oxidase. The protein is Dual oxidase maturation factor 1 (duoxa1) of Xenopus tropicalis (Western clawed frog).